The primary structure comprises 549 residues: Glucose-6-phosphate isomerase (549 aa).

Glu355 acts as the Proton donor in catalysis. Catalysis depends on residues His386 and Lys514.

It belongs to the GPI family.

It is found in the cytoplasm. The catalysed reaction is alpha-D-glucose 6-phosphate = beta-D-fructose 6-phosphate. The protein operates within carbohydrate biosynthesis; gluconeogenesis. It participates in carbohydrate degradation; glycolysis; D-glyceraldehyde 3-phosphate and glycerone phosphate from D-glucose: step 2/4. In terms of biological role, catalyzes the reversible isomerization of glucose-6-phosphate to fructose-6-phosphate. In Edwardsiella ictaluri (strain 93-146), this protein is Glucose-6-phosphate isomerase.